Reading from the N-terminus, the 236-residue chain is Phosphoribosylaminoimidazole-succinocarboxamide synthase (236 aa).

The protein belongs to the SAICAR synthetase family.

The enzyme catalyses 5-amino-1-(5-phospho-D-ribosyl)imidazole-4-carboxylate + L-aspartate + ATP = (2S)-2-[5-amino-1-(5-phospho-beta-D-ribosyl)imidazole-4-carboxamido]succinate + ADP + phosphate + 2 H(+). Its pathway is purine metabolism; IMP biosynthesis via de novo pathway; 5-amino-1-(5-phospho-D-ribosyl)imidazole-4-carboxamide from 5-amino-1-(5-phospho-D-ribosyl)imidazole-4-carboxylate: step 1/2. The polypeptide is Phosphoribosylaminoimidazole-succinocarboxamide synthase (Lysinibacillus sphaericus (strain C3-41)).